Consider the following 569-residue polypeptide: Urease subunit alpha (569 aa).

Residues 131-569 enclose the Urease domain; that stretch reads GGIDTHIHFI…LPMAQRYFLL (439 aa). The Ni(2+) site is built by His-136, His-138, and Lys-219. An N6-carboxylysine modification is found at Lys-219. Position 221 (His-221) interacts with substrate. 2 residues coordinate Ni(2+): His-248 and His-274. The active-site Proton donor is the His-322. Asp-362 is a Ni(2+) binding site.

This sequence belongs to the metallo-dependent hydrolases superfamily. Urease alpha subunit family. Heterotrimer of UreA (gamma), UreB (beta) and UreC (alpha) subunits. Three heterotrimers associate to form the active enzyme. It depends on Ni cation as a cofactor. Post-translationally, carboxylation allows a single lysine to coordinate two nickel ions.

The protein resides in the cytoplasm. The enzyme catalyses urea + 2 H2O + H(+) = hydrogencarbonate + 2 NH4(+). The protein operates within nitrogen metabolism; urea degradation; CO(2) and NH(3) from urea (urease route): step 1/1. In Synechococcus sp. (strain RCC307), this protein is Urease subunit alpha.